Here is a 201-residue protein sequence, read N- to C-terminus: MSEALNELASYIREARGALVAGSEVRYGELTLTTKAESLIALLTFLRDDVQCGFVSFIDVCGVDYPQRPDRFDVVYHLLSPRQNQRIRVKVATGENEPVPSITSVYPGADWFEREAYDMYGILFTGHPDLRRILTDYGFEGYPLRKDFPLTGFVEVRYDNEAKRVVYEPVELKQEFRNFDFLSPWEGTEYVLPGDEKAKSR.

It belongs to the complex I 30 kDa subunit family. NDH-1 is composed of 14 different subunits. Subunits NuoB, C, D, E, F, and G constitute the peripheral sector of the complex.

It is found in the cell inner membrane. It catalyses the reaction a quinone + NADH + 5 H(+)(in) = a quinol + NAD(+) + 4 H(+)(out). Functionally, NDH-1 shuttles electrons from NADH, via FMN and iron-sulfur (Fe-S) centers, to quinones in the respiratory chain. The immediate electron acceptor for the enzyme in this species is believed to be ubiquinone. Couples the redox reaction to proton translocation (for every two electrons transferred, four hydrogen ions are translocated across the cytoplasmic membrane), and thus conserves the redox energy in a proton gradient. The protein is NADH-quinone oxidoreductase subunit C of Sinorhizobium medicae (strain WSM419) (Ensifer medicae).